Reading from the N-terminus, the 158-residue chain is Large ribosomal subunit protein uL23 (158 aa).

The segment at 1 to 43 (MPPKSSTKAEPKASSAKTQVAKAKSAKKAVVKGTSSKTQRRIR) is disordered. Low complexity predominate over residues 12–23 (KASSAKTQVAKA).

The protein belongs to the universal ribosomal protein uL23 family.

This protein binds to a specific region on the 26S rRNA. The chain is Large ribosomal subunit protein uL23 from Puccinia graminis (Black stem rust fungus).